The chain runs to 169 residues: NADH dehydrogenase [ubiquinone] 1 alpha subcomplex assembly factor 2 (169 aa).

The disordered stretch occupies residues Thr116–Gln169. The residue at position 134 (Ser134) is a Phosphoserine. Positions Ala146–Pro156 are enriched in polar residues.

The protein belongs to the complex I NDUFA12 subunit family. Interacts with ARMC9. Highly expressed in ESCC cells. Also expressed in heart, skeletal muscle, liver, and in fibroblasts.

The protein resides in the mitochondrion. Its function is as follows. Acts as a molecular chaperone for mitochondrial complex I assembly. Complex I functions in the transfer of electrons from NADH to the respiratory chain. The immediate electron acceptor for the enzyme is believed to be ubiquinone. Is involved in the initial steps of cilia formation, including removal of CP110 from the mother centrioles, docking of membrane vesicles to the mother centrioles, and establishment of the transition zone. This Homo sapiens (Human) protein is NADH dehydrogenase [ubiquinone] 1 alpha subcomplex assembly factor 2 (NDUFAF2).